Reading from the N-terminus, the 340-residue chain is Phosphoribosylformylglycinamidine cyclo-ligase (340 aa).

The protein belongs to the AIR synthase family.

Its subcellular location is the cytoplasm. It carries out the reaction 2-formamido-N(1)-(5-O-phospho-beta-D-ribosyl)acetamidine + ATP = 5-amino-1-(5-phospho-beta-D-ribosyl)imidazole + ADP + phosphate + H(+). It functions in the pathway purine metabolism; IMP biosynthesis via de novo pathway; 5-amino-1-(5-phospho-D-ribosyl)imidazole from N(2)-formyl-N(1)-(5-phospho-D-ribosyl)glycinamide: step 2/2. The polypeptide is Phosphoribosylformylglycinamidine cyclo-ligase (Streptococcus pyogenes serotype M12 (strain MGAS2096)).